A 120-amino-acid chain; its full sequence is MKFYFVEYFILFTYIIISFILACIISLLSYLLTTKKEDPEKTSAYECGFNPFDDTRTTFDVKFYLVAILFFNFCLEISFLFPWSIVLGNISYFGFVAIILFLFILTIGFIYEWKKGALNW.

A run of 3 helical transmembrane segments spans residues 8–28, 63–83, and 90–110; these read YFILFTYIIISFILACIISLL, FYLVAILFFNFCLEISFLFPW, and ISYFGFVAIILFLFILTIGFI.

The protein belongs to the complex I subunit 3 family.

The protein localises to the mitochondrion membrane. It catalyses the reaction a ubiquinone + NADH + 5 H(+)(in) = a ubiquinol + NAD(+) + 4 H(+)(out). In terms of biological role, core subunit of the mitochondrial membrane respiratory chain NADH dehydrogenase (Complex I) that is believed to belong to the minimal assembly required for catalysis. Complex I functions in the transfer of electrons from NADH to the respiratory chain. The immediate electron acceptor for the enzyme is believed to be ubiquinone. This Cyanidium caldarium (Red alga) protein is NADH-ubiquinone oxidoreductase chain 3 (ND3).